The following is a 504-amino-acid chain: 13S globulin seed storage protein 2 (504 aa).

A signal peptide spans 1-20; the sequence is MSTKLILSFSLCLMVLSCSA. 2 disulfides stabilise this stretch: C46–C79 and C122–C320. Residues 51–265 form the Cupin type-1 1 domain; that stretch reads LTASEPSRRV…FRDVDRETIS (215 aa). 3 disordered regions span residues 128–158, 214–237, and 289–314; these read SDSE…GDQH, GQSQ…DDEA, and QDFE…RSNG. Composition is skewed to basic and acidic residues over residues 144–158 and 218–231; these read RQSE…GDQH and RETR…QSRE. The Cupin type-1 2 domain maps to 326-475; the sequence is RNFNTPTNTY…SYDISTKEAY (150 aa).

This sequence belongs to the 11S seed storage protein (globulins) family. In terms of assembly, hexamer; each subunit is composed of an acidic and a basic chain derived from a single precursor and linked by a disulfide bond.

Its function is as follows. Seed storage protein. The chain is 13S globulin seed storage protein 2 (FA18) from Fagopyrum esculentum (Common buckwheat).